The primary structure comprises 213 residues: ATP-dependent Clp protease proteolytic subunit 1 (213 aa).

The active-site Nucleophile is the Ser114. His139 is an active-site residue.

It belongs to the peptidase S14 family. In terms of assembly, fourteen ClpP subunits assemble into 2 heptameric rings which stack back to back to give a disk-like structure with a central cavity, resembling the structure of eukaryotic proteasomes.

The protein resides in the cytoplasm. The enzyme catalyses Hydrolysis of proteins to small peptides in the presence of ATP and magnesium. alpha-casein is the usual test substrate. In the absence of ATP, only oligopeptides shorter than five residues are hydrolyzed (such as succinyl-Leu-Tyr-|-NHMec, and Leu-Tyr-Leu-|-Tyr-Trp, in which cleavage of the -Tyr-|-Leu- and -Tyr-|-Trp bonds also occurs).. Functionally, cleaves peptides in various proteins in a process that requires ATP hydrolysis. Has a chymotrypsin-like activity. Plays a major role in the degradation of misfolded proteins. The sequence is that of ATP-dependent Clp protease proteolytic subunit 1 from Pseudomonas aeruginosa (strain ATCC 15692 / DSM 22644 / CIP 104116 / JCM 14847 / LMG 12228 / 1C / PRS 101 / PAO1).